The chain runs to 922 residues: GPI inositol-deacylase (922 aa).

The Cytoplasmic segment spans residues 1–11 (MFLHSVNLWNL). The helical transmembrane segment at 12-32 (AFYVFMVFLATLGLWDVFFGF) threads the bilayer. Over 33–597 (EENKCSMSYM…GQVVRFHGGA (565 aa)) the chain is Lumenal. Serine 174 is an active-site residue. N-linked (GlcNAc...) asparagine glycosylation is found at asparagine 363, asparagine 402, and asparagine 558. The chain crosses the membrane as a helical span at residues 598–618 (LPAYVVSSILLAYGGQLYSLL). Topologically, residues 619 to 641 (STGYCLEYSTILDKEAKPYKVDP) are cytoplasmic. Residues 642-662 (FVIMIKFLLGYKWFKELWDAV) form a helical membrane-spanning segment. The Lumenal portion of the chain corresponds to 663–668 (LLPELD). Residues 669–689 (AIVLTSQSMCFPLVSLILFLF) form a helical membrane-spanning segment. Residues 690–694 (GTCTA) lie on the Cytoplasmic side of the membrane. A helical transmembrane segment spans residues 695–715 (YWSGLLSSTSVQLLSSLWLAL). Over 716 to 733 (KRPAELPKDIKVMSPDLP) the chain is Lumenal. The chain crosses the membrane as a helical span at residues 734 to 754 (VLTVVFLIVSWTTCGALAILL). The Cytoplasmic portion of the chain corresponds to 755–817 (SYLYYVFKVV…DAEDSLRMHS (63 aa)). A disordered region spans residues 776-798 (NQPVNPKHSRRSEKKSNHHKDSA). Basic residues predominate over residues 782–793 (KHSRRSEKKSNH). The chain crosses the membrane as a helical span at residues 818 to 838 (TVINLLTWVVLLSMPSLIYWL). Over 839–894 (KNLRYYFKLSPDPCKPLAFLLIPAIAILGNTHTVSVKSSKLLKTVSQFPLPLAVGV) the chain is Lumenal. The chain crosses the membrane as a helical span at residues 895 to 915 (IAFGSSHLYRVPCFVIIPLVF). Topologically, residues 916–922 (HALCNFM) are cytoplasmic.

The protein belongs to the GPI inositol-deacylase family.

The protein localises to the endoplasmic reticulum membrane. Its function is as follows. GPI inositol-deacylase that catalyzes the remove of the acyl chain linked to the 2-OH position of inositol ring from the GPI-anchored protein (GPI-AP) in the endoplasmic reticulum. Initiates the post-attachment remodeling phase of GPI-AP biogenesis and participates in endoplasmic reticulum (ER)-to-Golgi transport of GPI-anchored protein. This chain is GPI inositol-deacylase, found in Mus musculus (Mouse).